The sequence spans 297 residues: MLLGSHVSMSGKKMLLGSAEEAASYGSTTFMIYTGAPQNTRRKPIEEMNIEAGQAFMKEHNLSNIVVHAPYIINLGNTIKTENFGFAVDFLRQEIERAQALGATQITLHPGAHVGAGPEAGIKQIVKGLNEVLWKEQIPQIALETMAGKGTEIGRTFDELAAIIDGVTLNDKLSVTLDTCHINDAGYNVKDDFDGVLVEFDKIIGLDRLKVIHVNDSKNPMGSHKDRHANIGFGTIGFEALNGVVHHEKLTALPKILETPYVGEDKKNKKAPYGFEIAMLKNQTFDPELLEKIQGQN.

Zn(2+) contacts are provided by His-68, His-109, Glu-144, Asp-178, His-181, His-213, Asp-226, His-228, and Glu-258.

Belongs to the AP endonuclease 2 family. Zn(2+) serves as cofactor.

The enzyme catalyses Endonucleolytic cleavage to 5'-phosphooligonucleotide end-products.. In terms of biological role, endonuclease IV plays a role in DNA repair. It cleaves phosphodiester bonds at apurinic or apyrimidinic (AP) sites, generating a 3'-hydroxyl group and a 5'-terminal sugar phosphate. The polypeptide is Probable endonuclease 4 (Enterococcus faecalis (strain ATCC 700802 / V583)).